The following is a 474-amino-acid chain: Dol-P-Glc:Glc(2)Man(9)GlcNAc(2)-PP-Dol alpha-1,2-glucosyltransferase (474 aa).

The Cytoplasmic portion of the chain corresponds to 1-6; that stretch reads MAQLEG. A helical transmembrane segment spans residues 7–27; that stretch reads YYFSAALSCTFLVSCLLFSAF. Over 28 to 64 the chain is Extracellular; sequence SRALREPYMDEIFHLPQAQRYCEGRFSLSQWDPMITT. A helical membrane pass occupies residues 65 to 85; the sequence is LPGLYLVSVGVVKPASWILGW. The Cytoplasmic portion of the chain corresponds to 86–97; the sequence is SEHVVCSIGMLR. Residues 98–118 form a helical membrane-spanning segment; that stretch reads FVNLLFSVGNFYLLYLLFRKI. Residues 119–126 lie on the Extracellular side of the membrane; it reads QPRNKASS. Residues 127–147 form a helical membrane-spanning segment; sequence SIQRILSTLTLAVFPTLYFFN. Residues 148 to 150 lie on the Cytoplasmic side of the membrane; sequence FLY. The chain crosses the membrane as a helical span at residues 151–171; it reads YTEAGSVFFTLFAYLMCLYGN. Residues 172 to 175 are Extracellular-facing; sequence HRTS. Residues 176–196 traverse the membrane as a helical segment; that stretch reads ALLGFCGFMFRQTNIIWAAFC. Topologically, residues 197–256 are cytoplasmic; it reads AGHIIAQKCSEAWKTELQKKKEERLPPAKGPLSELRRVLQFLLMYSMSLKNLSMLFLLTW. Residues 257–277 traverse the membrane as a helical segment; the sequence is PYMLLLLAFFVFVVVNGGIVV. The Extracellular portion of the chain corresponds to 278-283; the sequence is GDRSSH. A helical transmembrane segment spans residues 284–304; sequence EACLHFPQLFYFFSFTAFFSF. Residues 305–317 lie on the Cytoplasmic side of the membrane; sequence PHLLSPTKVKTFL. A helical transmembrane segment spans residues 318 to 338; sequence SLVWKRRVQFSVITLVSVFLV. At 339–365 the chain is on the extracellular side; the sequence is WKFTYVHKYLLADNRHYTFYVWKRVFQ. Residues 366–386 form a helical membrane-spanning segment; that stretch reads RHEIVKYLLVPAYMFAGWAVA. Over 387 to 392 the chain is Cytoplasmic; the sequence is DSLKSK. Residues 393–413 form a helical membrane-spanning segment; the sequence is SIFWNLMFFVCLVASTVPQKL. Topologically, residues 414-436 are extracellular; sequence LEFRYFILPYIIYRLNMPLPPIS. The chain crosses the membrane as a helical span at residues 437 to 457; it reads RLVCELGCYAVVNFLTFYIFL. Over 458 to 473 the chain is Cytoplasmic; that stretch reads NKTFQWSDSHDIQRFM.

It belongs to the ALG10 glucosyltransferase family. In terms of assembly, interacts with KCNH1; may regulate KCNH1, possibly by regulating its N-glycosylation. Interacts with KCNH2; may reduce KCNH2 sensitivity to classic proarrhythmic drug blockade, possibly by regulating its N-glycosylation. In terms of tissue distribution, highly expressed in brain, skeletal muscle, uterus, small intestine and liver. Moderately expressed in lung and kidney. Weakly expressed in heart and stomach.

The protein localises to the endoplasmic reticulum membrane. The catalysed reaction is an alpha-D-Glc-(1-&gt;3)-alpha-D-Glc-(1-&gt;3)-alpha-D-Man-(1-&gt;2)-alpha-D-Man-(1-&gt;2)-alpha-D-Man-(1-&gt;3)-[alpha-D-Man-(1-&gt;2)-alpha-D-Man-(1-&gt;3)-[alpha-D-Man-(1-&gt;2)-alpha-D-Man-(1-&gt;6)]-alpha-D-Man-(1-&gt;6)]-beta-D-Man-(1-&gt;4)-beta-D-GlcNAc-(1-&gt;4)-alpha-D-GlcNAc-diphospho-di-trans,poly-cis-dolichol + a di-trans,poly-cis-dolichyl beta-D-glucosyl phosphate = a alpha-D-Glc-(1-&gt;2)-alpha-D-Glc-(1-&gt;3)-alpha-D-Glc-(1-&gt;3)-alpha-D-Man-(1-&gt;2)-alpha-D-Man-(1-&gt;2)-alpha-D-Man-(1-&gt;3)-[alpha-D-Man-(1-&gt;2)-alpha-D-Man-(1-&gt;3)-[alpha-D-Man-(1-&gt;2)-alpha-D-Man-(1-&gt;6)]-alpha-D-Man-(1-&gt;6)]-beta-D-Man-(1-&gt;4)-beta-D-GlcNAc-(1-&gt;4)-alpha-D-GlcNAc-diphospho-di-trans,poly-cis-dolichol + a di-trans,poly-cis-dolichyl phosphate + H(+). Its pathway is protein modification; protein glycosylation. In terms of biological role, dol-P-Glc:Glc(2)Man(9)GlcNAc(2)-PP-Dol alpha-1,2-glucosyltransferase that operates in the biosynthetic pathway of dolichol-linked oligosaccharides, the glycan precursors employed in protein asparagine (N)-glycosylation. The assembly of dolichol-linked oligosaccharides begins on the cytosolic side of the endoplasmic reticulum membrane and finishes in its lumen. The sequential addition of sugars to dolichol pyrophosphate produces dolichol-linked oligosaccharides containing fourteen sugars, including two GlcNAcs, nine mannoses and three glucoses. Once assembled, the oligosaccharide is transferred from the lipid to nascent proteins by oligosaccharyltransferases. In the lumen of the endoplasmic reticulum, adds the third and last glucose residue from dolichyl phosphate glucose (Dol-P-Glc) onto the lipid-linked oligosaccharide intermediate Glc(2)Man(9)GlcNAc(2)-PP-Dol to produce Glc(3)Man(9)GlcNAc(2)-PP-Dol. This Rattus norvegicus (Rat) protein is Dol-P-Glc:Glc(2)Man(9)GlcNAc(2)-PP-Dol alpha-1,2-glucosyltransferase.